A 556-amino-acid chain; its full sequence is Formate--tetrahydrofolate ligase 1 (556 aa).

65 to 72 (TPAGEGKS) provides a ligand contact to ATP.

It belongs to the formate--tetrahydrofolate ligase family.

The catalysed reaction is (6S)-5,6,7,8-tetrahydrofolate + formate + ATP = (6R)-10-formyltetrahydrofolate + ADP + phosphate. It participates in one-carbon metabolism; tetrahydrofolate interconversion. This chain is Formate--tetrahydrofolate ligase 1, found in Streptococcus pyogenes serotype M18 (strain MGAS8232).